Reading from the N-terminus, the 493-residue chain is Na(+)/H(+) antiporter subunit D (493 aa).

Transmembrane regions (helical) follow at residues 3–23 (NFVILPILIPLLSAILLIFMT), 31–51 (IFSTAASAIGIVISGILVQTV), 77–97 (FASLLVLTTAIIGLLVGLYSF), 107–127 (SFYYSGVQFLLAGVSGAFLTG), 129–149 (LFNMYVFFELLLIASYMLIVL), 163–183 (IVFNIVSSALFVIGVGFLYAV), 203–223 (GLITVIGVLLLLVFGMKGGIF), 227–247 (FWLPGSYYAPPAAISALFGAL), 251–271 (VGLYAITRVFTLIFIHDTAFT), 274–294 (LMIWLAALTVIFGVIGSLAYS), 299–319 (IVIYNIITAVGVILFGVAVHT), 330–350 (LIHDMLIKGALFMLAGTLIAL), 370–390 (GWMFFISAISLAGIPPLSGFV), 407–427 (ISMLILLSSLLVLYSVLRIFI), and 449–469 (LYPAAIFLLLSLLFGLGTEWV).

This sequence belongs to the CPA3 antiporters (TC 2.A.63) subunit D family. Forms a heterooligomeric complex that consists of seven subunits: MrpA, MrpB, MrpC, MrpD, MrpE, MrpF and MrpG.

It is found in the cell membrane. Mrp complex is a Na(+)/H(+) antiporter that is considered to be the major Na(+) excretion system in B.subtilis. Has a major role in Na(+) resistance and a minor role in Na(+)- and K(+)-dependent pH homeostasis as compared to TetB. MrpA may be the actual Na(+)/H(+) antiporter, although the six other Mrp proteins are all required for Na(+)/H(+) antiport activity and Na(+) resistance. MrpA is required for initiation of sporulation when external Na(+) concentration increases. Also transports Li(+) but not K(+), Ca(2+) or Mg(2+). This chain is Na(+)/H(+) antiporter subunit D (mrpD), found in Bacillus subtilis (strain 168).